Consider the following 232-residue polypeptide: Demethylmenaquinone methyltransferase (232 aa).

Residues Thr-58, Asp-79, and 104 to 105 (NA) each bind S-adenosyl-L-methionine.

It belongs to the class I-like SAM-binding methyltransferase superfamily. MenG/UbiE family.

It catalyses the reaction a 2-demethylmenaquinol + S-adenosyl-L-methionine = a menaquinol + S-adenosyl-L-homocysteine + H(+). It functions in the pathway quinol/quinone metabolism; menaquinone biosynthesis; menaquinol from 1,4-dihydroxy-2-naphthoate: step 2/2. Its function is as follows. Methyltransferase required for the conversion of demethylmenaquinol (DMKH2) to menaquinol (MKH2). This Bacillus licheniformis (strain ATCC 14580 / DSM 13 / JCM 2505 / CCUG 7422 / NBRC 12200 / NCIMB 9375 / NCTC 10341 / NRRL NRS-1264 / Gibson 46) protein is Demethylmenaquinone methyltransferase.